The primary structure comprises 350 residues: Anthranilate phosphoribosyltransferase (350 aa).

5-phospho-alpha-D-ribose 1-diphosphate-binding positions include G94, 97–98, T102, 104–107, 122–130, and S134; these read GD, NVST, and KHGNRSVSS. Anthranilate is bound at residue G94. Position 106 (S106) interacts with Mg(2+). N125 serves as a coordination point for anthranilate. R180 contributes to the anthranilate binding site. Mg(2+)-binding residues include D239 and E240.

It belongs to the anthranilate phosphoribosyltransferase family. Homodimer. Mg(2+) serves as cofactor.

It carries out the reaction N-(5-phospho-beta-D-ribosyl)anthranilate + diphosphate = 5-phospho-alpha-D-ribose 1-diphosphate + anthranilate. It functions in the pathway amino-acid biosynthesis; L-tryptophan biosynthesis; L-tryptophan from chorismate: step 2/5. Its function is as follows. Catalyzes the transfer of the phosphoribosyl group of 5-phosphorylribose-1-pyrophosphate (PRPP) to anthranilate to yield N-(5'-phosphoribosyl)-anthranilate (PRA). This chain is Anthranilate phosphoribosyltransferase, found in Pelobacter propionicus (strain DSM 2379 / NBRC 103807 / OttBd1).